The following is a 246-amino-acid chain: Carboxymethylenebutenolidase homolog (246 aa).

Active-site residues include Cys-132, Asp-179, and His-212.

This sequence belongs to the dienelactone hydrolase family.

The protein resides in the cytoplasm. It localises to the cytosol. Functionally, cysteine hydrolase. The chain is Carboxymethylenebutenolidase homolog (cmbl) from Xenopus tropicalis (Western clawed frog).